The chain runs to 109 residues: Synaptobrevin-1 (109 aa).

Residues 1-26 (MDAQGDAGAQGGSQGGPRPSNKRLQQ) form a disordered region. The Cytoplasmic portion of the chain corresponds to 1-86 (MDAQGDAGAQ…KRKYWWKNIK (86 aa)). The v-SNARE coiled-coil homology domain occupies 23-83 (RLQQTQAQVD…ATLKRKYWWK (61 aa)). A helical; Anchor for type IV membrane protein membrane pass occupies residues 87 to 107 (MMIIMCAIVVILIIIIVLWAG). Over 108-109 (GK) the chain is Extracellular.

Belongs to the synaptobrevin family. As to quaternary structure, part of the SNARE core complex containing ric-4/SNAP25, snb-1/VAMP2 and unc-64/STX1A. This complex binds to cpx-1/CPLX1. Expressed in the nervous system notably the nerve ring, ventral cord and dorsal cord.

The protein localises to the cytoplasmic vesicle. It localises to the secretory vesicle. Its subcellular location is the synaptic vesicle membrane. It is found in the cell membrane. The protein resides in the synapse. The protein localises to the synaptosome. Involved in the targeting and/or fusion of transport vesicles to their target membrane. Acts in neuronal exocytosis of synaptic transmission. Likely to have a role in cholinergic transmisson. Required for viability, coordinated movement and M3 pharynx motor neuron function. In Caenorhabditis elegans, this protein is Synaptobrevin-1.